A 215-amino-acid polypeptide reads, in one-letter code: Peroxiredoxin (215 aa).

The Thioredoxin domain occupies 6-161 (PLIGEEFPRL…ILRAVRALQT (156 aa)). The Cysteine sulfenic acid (-SOH) intermediate role is filled by cysteine 48. Arginine 124 lines the substrate pocket. A disulfide bond links cysteine 205 and cysteine 211.

It belongs to the peroxiredoxin family. Prx6 subfamily. As to quaternary structure, homodecamer. Pentamer of dimers that assemble into a ring structure.

Its subcellular location is the cytoplasm. The enzyme catalyses a hydroperoxide + [thioredoxin]-dithiol = an alcohol + [thioredoxin]-disulfide + H2O. In terms of biological role, thiol-specific peroxidase that catalyzes the reduction of hydrogen peroxide and organic hydroperoxides to water and alcohols, respectively. Plays a role in cell protection against oxidative stress by detoxifying peroxides. This is Peroxiredoxin from Thermotoga petrophila (strain ATCC BAA-488 / DSM 13995 / JCM 10881 / RKU-1).